The chain runs to 172 residues: Adenine phosphoribosyltransferase (172 aa).

It belongs to the purine/pyrimidine phosphoribosyltransferase family. As to quaternary structure, homodimer.

Its subcellular location is the cytoplasm. The enzyme catalyses AMP + diphosphate = 5-phospho-alpha-D-ribose 1-diphosphate + adenine. The protein operates within purine metabolism; AMP biosynthesis via salvage pathway; AMP from adenine: step 1/1. Functionally, catalyzes a salvage reaction resulting in the formation of AMP, that is energically less costly than de novo synthesis. The sequence is that of Adenine phosphoribosyltransferase from Staphylococcus carnosus (strain TM300).